Consider the following 295-residue polypeptide: Indole-3-glycerol phosphate synthase (295 aa).

This sequence belongs to the TrpC family.

The enzyme catalyses 1-(2-carboxyphenylamino)-1-deoxy-D-ribulose 5-phosphate + H(+) = (1S,2R)-1-C-(indol-3-yl)glycerol 3-phosphate + CO2 + H2O. It participates in amino-acid biosynthesis; L-tryptophan biosynthesis; L-tryptophan from chorismate: step 4/5. The sequence is that of Indole-3-glycerol phosphate synthase from Prochlorococcus marinus (strain MIT 9215).